A 482-amino-acid polypeptide reads, in one-letter code: Arginine/ornithine antiporter (482 aa).

The Cytoplasmic portion of the chain corresponds to Met-1–Arg-10. Residues Leu-11–Pro-31 traverse the membrane as a helical segment. The Periplasmic portion of the chain corresponds to Gln-32–Val-40. The helical transmembrane segment at Gly-41–Phe-61 threads the bilayer. Topologically, residues Gln-62–Trp-100 are cytoplasmic. The chain crosses the membrane as a helical span at residues Leu-101–Phe-121. Residues Gly-122 to Gly-124 lie on the Periplasmic side of the membrane. A helical transmembrane segment spans residues Asp-125–Leu-145. Over Arg-146 to Thr-156 the chain is Cytoplasmic. A helical membrane pass occupies residues Val-157 to Phe-177. Topologically, residues Lys-178 to Arg-202 are periplasmic. The chain crosses the membrane as a helical span at residues Asn-203 to Ser-223. Topologically, residues Arg-224–Thr-235 are cytoplasmic. The helical transmembrane segment at Val-236–Val-256 threads the bilayer. Over Met-257–Ala-283 the chain is Periplasmic. The chain crosses the membrane as a helical span at residues Val-284–Leu-304. The Cytoplasmic portion of the chain corresponds to Cys-305–Asn-333. Residues Ala-334–Gly-354 form a helical membrane-spanning segment. Residues Asp-355–Met-365 are Periplasmic-facing. A helical transmembrane segment spans residues Leu-366–Leu-386. Topologically, residues Leu-387–Lys-403 are cytoplasmic. A helical transmembrane segment spans residues Asp-404–Leu-424. A topological domain (periplasmic) is located at residue Lys-425. The helical transmembrane segment at Tyr-426–His-446 threads the bilayer. The Cytoplasmic segment spans residues Glu-447–Lys-458. Residues Leu-459–Phe-479 traverse the membrane as a helical segment. The Periplasmic portion of the chain corresponds to Leu-480 to Leu-482.

The protein belongs to the amino acid-polyamine-organocation (APC) superfamily. Basic amino acid/polyamine antiporter (APA) (TC 2.A.3.2) family.

It is found in the cell inner membrane. The catalysed reaction is L-ornithine(in) + L-arginine(out) = L-ornithine(out) + L-arginine(in). Its function is as follows. Catalyzes electroneutral exchange between arginine and ornithine to allow high-efficiency energy conversion in the arginine deiminase pathway. Also mediates the proton motive force-driven uptake of arginine and ornithine, but the exchange is several orders of magnitude faster than the proton motive force-driven transport. This chain is Arginine/ornithine antiporter, found in Pseudomonas aeruginosa (strain ATCC 15692 / DSM 22644 / CIP 104116 / JCM 14847 / LMG 12228 / 1C / PRS 101 / PAO1).